The chain runs to 591 residues: Pentatricopeptide repeat-containing protein At2g35130 (591 aa).

PPR repeat units follow at residues D154–P188, T189–P223, G227–P262, T263–P297, N298–P332, D333–P367, D368–P402, T403–P437, D438–A472, D473–P507, D508–P542, and D543–G573.

It belongs to the PPR family. P subfamily.

This chain is Pentatricopeptide repeat-containing protein At2g35130, found in Arabidopsis thaliana (Mouse-ear cress).